The primary structure comprises 556 residues: Formate--tetrahydrofolate ligase (556 aa).

65-72 provides a ligand contact to ATP; it reads TPAGEGKS.

It belongs to the formate--tetrahydrofolate ligase family.

The catalysed reaction is (6S)-5,6,7,8-tetrahydrofolate + formate + ATP = (6R)-10-formyltetrahydrofolate + ADP + phosphate. It participates in one-carbon metabolism; tetrahydrofolate interconversion. This is Formate--tetrahydrofolate ligase from Streptococcus pneumoniae (strain 70585).